Here is a 160-residue protein sequence, read N- to C-terminus: Large ribosomal subunit protein uL10 (160 aa).

This sequence belongs to the universal ribosomal protein uL10 family. As to quaternary structure, part of the ribosomal stalk of the 50S ribosomal subunit. The N-terminus interacts with L11 and the large rRNA to form the base of the stalk. The C-terminus forms an elongated spine to which L12 dimers bind in a sequential fashion forming a multimeric L10(L12)X complex.

Forms part of the ribosomal stalk, playing a central role in the interaction of the ribosome with GTP-bound translation factors. The sequence is that of Large ribosomal subunit protein uL10 from Ehrlichia canis (strain Jake).